The following is a 1121-amino-acid chain: Phosphatidylinositol 4-kinase beta 1 (1121 aa).

In terms of domain architecture, PIK helical spans 1–143 (MPMGRFLSLV…SRIQEKCQIA (143 aa)). The span at 187 to 207 (PPTQKSLSFSPSPGTNVQDDG) shows a compositional bias: polar residues. The disordered stretch occupies residues 187–210 (PPTQKSLSFSPSPGTNVQDDGSQL). A run of 9 repeats spans residues 212–231 (AEDNKIFKKLIPSPKVRDAL), 244–263 (SEKEGFFKRLLRDSKGEGDE), 266–285 (PNSEGFFKRLLKDNKSEDED), 288–306 (NSSEGFFKRLLSSKGESEE), 309–328 (SSSDGLFKRLLRDNKGDEEE), 331–350 (ANSDSFFKRLLRESKNEDEE), 353–372 (PNSEGFFKKLFRDSKPEDDK), 380–398 (EDKDGFLKKLFREKNDDKR), and 420–438 (DEREGFFKKFFKEKSDDKK). The segment at 212–508 (AEDNKIFKKL…FRDRDQSVED (297 aa)) is 11 X 20 AA approximate repeats (PPC). Disordered regions lie at residues 343–421 (ESKN…EEDE), 435–489 (DDKK…ESSP), 506–544 (VEDSELFGSKKHKEKRPGSPKQRDDTPSGKPPLPNNTAS), and 794–825 (AAAAKGEAPPGLPLKGAGQDSSDAQPRANGGM). Basic and acidic residues-rich tracts occupy residues 358-376 (FFKKLFRDSKPEDDKVPKE), 383-405 (DGFLKKLFREKNDDKRHGSEKNE), 412-421 (ADKKSGEEDE), and 435-445 (DDKKDIVKVDD). Residues 446-455 (GNESEGDESP) are compositionally biased toward acidic residues. Phosphoserine is present on residues S449 and S454. Tandem repeats lie at residues 454–472 (SPEFSLFKRLFRIHPEDAK) and 489–508 (PGTENFFRKLFRDRDQSVED). Residues 466 to 475 (IHPEDAKPTS) are compositionally biased toward basic and acidic residues. Residues 476–489 (ENENSSNGLVESSP) are compositionally biased toward polar residues. The region spanning 835 to 1106 (ELWEGKRDRI…LISSSLDAWR (272 aa)) is the PI3K/PI4K catalytic domain. A G-loop region spans residues 841-847 (RDRIRKA). Positions 969-977 (QVKDRHNGN) are catalytic loop. Residues 988 to 1012 (HIDFGFMLSNSPGGVNFESAPFKLT) form an activation loop region.

It belongs to the PI3/PI4-kinase family. Type III PI4K subfamily. Interacts with AHK2, CBL1 and RABA4D. As to expression, expressed constitutively in leaves, roots, flowers, and stems.

The protein localises to the cell membrane. Its subcellular location is the golgi apparatus. It localises to the trans-Golgi network. It is found in the cytoplasmic vesicle membrane. The enzyme catalyses a 1,2-diacyl-sn-glycero-3-phospho-(1D-myo-inositol) + ATP = a 1,2-diacyl-sn-glycero-3-phospho-(1D-myo-inositol 4-phosphate) + ADP + H(+). Stimulated by phosphatidylinositol 4-phosphate (PtdIns4P). Slightly repressed by phosphatidyl-choline (PtdCho), wortmannin and adenosine. Functionally, acts on phosphatidylinositol (PtdIns) in the first committed step in the production of the second messenger inositol-1,4,5-trisphosphate. Necessary for proper organization of the trans-Golgi network (TGN) and post-Golgi secretion in root hairs. Together with PI4KB2, required during polarized root hair expansion and pollen tube elongation. Functions redundantly with PI4KB2 upstream of the cold response phosphoinositide-dependent phospholipase C (PI-PLC) pathway. The protein is Phosphatidylinositol 4-kinase beta 1 of Arabidopsis thaliana (Mouse-ear cress).